Reading from the N-terminus, the 99-residue chain is Plastocyanin (99 aa).

The Plastocyanin-like domain occupies 1–99 (IEVLLGSDDG…AGMVGKVTVN (99 aa)). Residues histidine 37, cysteine 84, histidine 87, and methionine 92 each coordinate Cu cation.

Belongs to the plastocyanin family. The cofactor is Cu(2+).

Its subcellular location is the plastid. The protein resides in the chloroplast thylakoid membrane. Participates in electron transfer between P700 and the cytochrome b6-f complex in photosystem I. The protein is Plastocyanin (PETE) of Solanum crispum (Chilean potato-tree).